A 251-amino-acid chain; its full sequence is Imidazole glycerol phosphate synthase subunit HisF (251 aa).

Active-site residues include aspartate 10 and aspartate 129.

It belongs to the HisA/HisF family. In terms of assembly, heterodimer of HisH and HisF.

It localises to the cytoplasm. The enzyme catalyses 5-[(5-phospho-1-deoxy-D-ribulos-1-ylimino)methylamino]-1-(5-phospho-beta-D-ribosyl)imidazole-4-carboxamide + L-glutamine = D-erythro-1-(imidazol-4-yl)glycerol 3-phosphate + 5-amino-1-(5-phospho-beta-D-ribosyl)imidazole-4-carboxamide + L-glutamate + H(+). It participates in amino-acid biosynthesis; L-histidine biosynthesis; L-histidine from 5-phospho-alpha-D-ribose 1-diphosphate: step 5/9. Its function is as follows. IGPS catalyzes the conversion of PRFAR and glutamine to IGP, AICAR and glutamate. The HisF subunit catalyzes the cyclization activity that produces IGP and AICAR from PRFAR using the ammonia provided by the HisH subunit. The sequence is that of Imidazole glycerol phosphate synthase subunit HisF from Cutibacterium acnes (strain DSM 16379 / KPA171202) (Propionibacterium acnes).